The following is an 875-amino-acid chain: Neurotrypsin (875 aa).

The first 20 residues, 1–20 (MTLARFVLALVLGALPEVVG), serve as a signal peptide directing secretion. Asn-26 carries N-linked (GlcNAc...) asparagine glycosylation. The interval 29–68 (LHHRHRHSPPPGPQYPYYLPTHQRPPRTRPPPPLPRFSRP) is disordered. A Kringle domain is found at 93 to 165 (CPPGEPWVSV…GKVDWGYCDC (73 aa)). Intrachain disulfides connect Cys-93/Cys-165, Cys-109/Cys-149, Cys-138/Cys-163, Cys-195/Cys-259, Cys-208/Cys-269, Cys-239/Cys-249, Cys-305/Cys-369, Cys-318/Cys-379, Cys-349/Cys-359, Cys-412/Cys-475, Cys-425/Cys-485, Cys-455/Cys-465, Cys-525/Cys-589, Cys-538/Cys-599, Cys-569/Cys-579, Cys-619/Cys-750, Cys-661/Cys-677, Cys-765/Cys-831, Cys-794/Cys-808, and Cys-821/Cys-850. SRCR domains are found at residues 170–271 (VRLR…TCSF), 280–381 (IRLV…SCTP), 387–487 (IRLA…ACYP), and 500–601 (VRLM…ICDY). The interval 619–630 (CGLRLLHRRQKR) is zymogen activation region. Residues 631 to 874 (IIGGKNSLRG…FVPWIKSVTK (244 aa)) enclose the Peptidase S1 domain. Residue His-676 is the Charge relay system of the active site. A glycan (N-linked (GlcNAc...) asparagine) is linked at Asn-683. Asp-726 serves as the catalytic Charge relay system. Residue Ser-825 is the Charge relay system of the active site.

This sequence belongs to the peptidase S1 family.

The protein resides in the secreted. In terms of biological role, plays a role in neuronal plasticity and the proteolytic action may subserve structural reorganizations associated with learning and memory operations. This Trachypithecus phayrei (Phayre's leaf monkey) protein is Neurotrypsin (PRSS12).